The following is a 215-amino-acid chain: Cytidylate kinase (215 aa).

Residue 10-18 participates in ATP binding; it reads GPAASGKGT.

It belongs to the cytidylate kinase family. Type 1 subfamily.

Its subcellular location is the cytoplasm. The catalysed reaction is CMP + ATP = CDP + ADP. It catalyses the reaction dCMP + ATP = dCDP + ADP. This is Cytidylate kinase from Bartonella tribocorum (strain CIP 105476 / IBS 506).